Here is a 195-residue protein sequence, read N- to C-terminus: Nascent polypeptide-associated complex subunit alpha (195 aa).

Disordered regions lie at residues 1-59 and 132-153; these read MTGS…SRSE and TREA…EEDS. A compositionally biased stretch (basic and acidic residues) spans 7-16; sequence TRQKEVKEPQ. Residues 19–33 are compositionally biased toward acidic residues; it reads VSDDSDNEAVEQELT. Over residues 47 to 59 the composition is skewed to basic and acidic residues; sequence DHIDKQAKQSRSE. Positions 56-121 constitute an NAC-A/B domain; it reads SRSEKKARKL…AKIEDLTQHA (66 aa). Over residues 142–153 the composition is skewed to acidic residues; sequence EEDENEDVEEDS.

Belongs to the NAC-alpha family. As to quaternary structure, may be part of the nascent polypeptide-associated complex (NAC), which is a heterodimer of icd-2 and icd-1 (via NAC-A/B domains).

The protein resides in the cytoplasm. Its function is as follows. May prevent inappropriate targeting of non-secretory polypeptides to the endoplasmic reticulum (ER). Plays a role in the response to heat stress. The polypeptide is Nascent polypeptide-associated complex subunit alpha (Caenorhabditis elegans).